Reading from the N-terminus, the 540-residue chain is Chaperonin GroEL 2 (540 aa).

Residues 29-32 (TLGP), 86-90 (DGTTT), Gly413, and Asp492 contribute to the ATP site. Residues 521–540 (KPEKEKASVPGGGDMGGMDF) form a disordered region. Over residues 530-540 (PGGGDMGGMDF) the composition is skewed to gly residues.

Belongs to the chaperonin (HSP60) family. In terms of assembly, forms a cylinder of 14 subunits composed of two heptameric rings stacked back-to-back. Interacts with the co-chaperonin GroES.

The protein resides in the secreted. Its subcellular location is the capsule. The protein localises to the cell surface. It is found in the cell wall. The enzyme catalyses ATP + H2O + a folded polypeptide = ADP + phosphate + an unfolded polypeptide.. Together with its co-chaperonin GroES, plays an essential role in assisting protein folding. The GroEL-GroES system forms a nano-cage that allows encapsulation of the non-native substrate proteins and provides a physical environment optimized to promote and accelerate protein folding. The chain is Chaperonin GroEL 2 from Mycobacterium tuberculosis (strain ATCC 25177 / H37Ra).